A 338-amino-acid polypeptide reads, in one-letter code: MKVFYDKDCDLSLVKGKTVAIIGYGSQGHAHALNLHDSGVKVVVGLRKGGASWNKAANAGLEVAEVAEAVKRADIVMMLLPDENIAAVYRDEVHANIKAGAALAFAHGFNVHYGQVVPREDIDVIMVAPKAPGHTVRSTYSQGGGVPHLIAVYQDKSGSARDVALSYASANGGGRAGIIETNFREETETDLFGEQAVLCGGTVELIKAGFDTLVEAGYAPEMAYFECLHELKLIVDLIYEGGIANMNYSISNNAEFGEYETGPKVVTDATRQAMRECLTAIQTGEYAKKFILENAAGAPTLTSRRRINAESQIEQVGGKLRAMMPWIAANKLVDKAKN.

Residues 1 to 181 enclose the KARI N-terminal Rossmann domain; it reads MKVFYDKDCD…GGGRAGIIET (181 aa). Residues 24–27, arginine 47, and serine 52 each bind NADP(+); that span reads YGSQ. Histidine 107 is a catalytic residue. An NADP(+)-binding site is contributed by glycine 133. In terms of domain architecture, KARI C-terminal knotted spans 182–327; it reads NFREETETDL…GKLRAMMPWI (146 aa). Mg(2+)-binding residues include aspartate 190, glutamate 194, glutamate 226, and glutamate 230. Serine 251 lines the substrate pocket.

It belongs to the ketol-acid reductoisomerase family. The cofactor is Mg(2+).

It catalyses the reaction (2R)-2,3-dihydroxy-3-methylbutanoate + NADP(+) = (2S)-2-acetolactate + NADPH + H(+). It carries out the reaction (2R,3R)-2,3-dihydroxy-3-methylpentanoate + NADP(+) = (S)-2-ethyl-2-hydroxy-3-oxobutanoate + NADPH + H(+). It functions in the pathway amino-acid biosynthesis; L-isoleucine biosynthesis; L-isoleucine from 2-oxobutanoate: step 2/4. The protein operates within amino-acid biosynthesis; L-valine biosynthesis; L-valine from pyruvate: step 2/4. In terms of biological role, involved in the biosynthesis of branched-chain amino acids (BCAA). Catalyzes an alkyl-migration followed by a ketol-acid reduction of (S)-2-acetolactate (S2AL) to yield (R)-2,3-dihydroxy-isovalerate. In the isomerase reaction, S2AL is rearranged via a Mg-dependent methyl migration to produce 3-hydroxy-3-methyl-2-ketobutyrate (HMKB). In the reductase reaction, this 2-ketoacid undergoes a metal-dependent reduction by NADPH to yield (R)-2,3-dihydroxy-isovalerate. The chain is Ketol-acid reductoisomerase (NADP(+)) from Bordetella bronchiseptica (strain ATCC BAA-588 / NCTC 13252 / RB50) (Alcaligenes bronchisepticus).